The sequence spans 241 residues: Uridylate kinase (241 aa).

11-14 contributes to the ATP binding site; the sequence is KFSG. The interval 19-24 is involved in allosteric activation by GTP; the sequence is GENGFG. G53 provides a ligand contact to UMP. G54 and R58 together coordinate ATP. UMP contacts are provided by residues D74 and 135-142; that span reads TGNPFFTT. ATP is bound by residues T162, Y168, and D171.

This sequence belongs to the UMP kinase family. As to quaternary structure, homohexamer.

The protein resides in the cytoplasm. It carries out the reaction UMP + ATP = UDP + ADP. It participates in pyrimidine metabolism; CTP biosynthesis via de novo pathway; UDP from UMP (UMPK route): step 1/1. Its activity is regulated as follows. Allosterically activated by GTP. Inhibited by UTP. In terms of biological role, catalyzes the reversible phosphorylation of UMP to UDP. This is Uridylate kinase from Wolinella succinogenes (strain ATCC 29543 / DSM 1740 / CCUG 13145 / JCM 31913 / LMG 7466 / NCTC 11488 / FDC 602W) (Vibrio succinogenes).